The chain runs to 223 residues: Glycolipid transfer protein 2 (223 aa).

A ganglioside GM3 (d18:1(4E)) contacts are provided by aspartate 69, asparagine 73, tryptophan 116, and histidine 155.

This sequence belongs to the GLTP family.

Transfers glycolipids in vitro. This Arabidopsis thaliana (Mouse-ear cress) protein is Glycolipid transfer protein 2.